We begin with the raw amino-acid sequence, 307 residues long: PCP degradation transcriptional activation protein (307 aa).

The HTH lysR-type domain occupies 6–63 (LPLGHLMVFDALYRHGSAGKAAHALSMPQPTLSRWLAQLRTHFDDPLFVRTRSGMEPT). Residues 23 to 42 (AGKAAHALSMPQPTLSRWLA) constitute a DNA-binding region (H-T-H motif).

Belongs to the LysR transcriptional regulatory family.

Transcriptional activator for the pcpA, pcpB and pcpE genes for pentachlorophenol (PCP) degradation. Essential for PCP degradation. The polypeptide is PCP degradation transcriptional activation protein (pcpR) (Sphingobium chlorophenolicum).